The chain runs to 1093 residues: Mediator of RNA polymerase II transcription subunit 14 (1093 aa).

Disordered regions lie at residues 1 to 61 (MPGV…KIDG) and 1035 to 1060 (TKSD…SQAA). Polar residues predominate over residues 19–31 (DTQTPSNGDNLRN). Positions 41–61 (KGDKDHDPDKESYTGKPKIDG) are enriched in basic and acidic residues. The span at 1040 to 1056 (DYSTQPVPEKQSQTGAP) shows a compositional bias: polar residues.

The protein belongs to the Mediator complex subunit 14 family. Component of the Mediator complex.

Its subcellular location is the nucleus. In terms of biological role, component of the Mediator complex, a coactivator involved in the regulated transcription of nearly all RNA polymerase II-dependent genes. Mediator functions as a bridge to convey information from gene-specific regulatory proteins to the basal RNA polymerase II transcription machinery. Mediator is recruited to promoters by direct interactions with regulatory proteins and serves as a scaffold for the assembly of a functional preinitiation complex with RNA polymerase II and the general transcription factors. The chain is Mediator of RNA polymerase II transcription subunit 14 (rgr1) from Neosartorya fischeri (strain ATCC 1020 / DSM 3700 / CBS 544.65 / FGSC A1164 / JCM 1740 / NRRL 181 / WB 181) (Aspergillus fischerianus).